Reading from the N-terminus, the 405-residue chain is Tryptophan synthase beta chain (405 aa).

Position 98 is an N6-(pyridoxal phosphate)lysine (lysine 98).

This sequence belongs to the TrpB family. In terms of assembly, tetramer of two alpha and two beta chains. The cofactor is pyridoxal 5'-phosphate.

The catalysed reaction is (1S,2R)-1-C-(indol-3-yl)glycerol 3-phosphate + L-serine = D-glyceraldehyde 3-phosphate + L-tryptophan + H2O. It functions in the pathway amino-acid biosynthesis; L-tryptophan biosynthesis; L-tryptophan from chorismate: step 5/5. The beta subunit is responsible for the synthesis of L-tryptophan from indole and L-serine. The sequence is that of Tryptophan synthase beta chain from Stenotrophomonas maltophilia (strain K279a).